The primary structure comprises 111 residues: Large ribosomal subunit protein uL22 (111 aa).

It belongs to the universal ribosomal protein uL22 family. Part of the 50S ribosomal subunit.

This protein binds specifically to 23S rRNA; its binding is stimulated by other ribosomal proteins, e.g. L4, L17, and L20. It is important during the early stages of 50S assembly. It makes multiple contacts with different domains of the 23S rRNA in the assembled 50S subunit and ribosome. Functionally, the globular domain of the protein is located near the polypeptide exit tunnel on the outside of the subunit, while an extended beta-hairpin is found that lines the wall of the exit tunnel in the center of the 70S ribosome. The polypeptide is Large ribosomal subunit protein uL22 (Chlamydia trachomatis serovar A (strain ATCC VR-571B / DSM 19440 / HAR-13)).